A 458-amino-acid polypeptide reads, in one-letter code: ATP synthase subunit beta (458 aa).

148 to 155 lines the ATP pocket; it reads GGAGVGKT.

Belongs to the ATPase alpha/beta chains family. In terms of assembly, F-type ATPases have 2 components, CF(1) - the catalytic core - and CF(0) - the membrane proton channel. CF(1) has five subunits: alpha(3), beta(3), gamma(1), delta(1), epsilon(1). CF(0) has three main subunits: a(1), b(2) and c(9-12). The alpha and beta chains form an alternating ring which encloses part of the gamma chain. CF(1) is attached to CF(0) by a central stalk formed by the gamma and epsilon chains, while a peripheral stalk is formed by the delta and b chains.

The protein localises to the cell inner membrane. The catalysed reaction is ATP + H2O + 4 H(+)(in) = ADP + phosphate + 5 H(+)(out). In terms of biological role, produces ATP from ADP in the presence of a proton gradient across the membrane. The catalytic sites are hosted primarily by the beta subunits. The protein is ATP synthase subunit beta of Francisella tularensis subsp. mediasiatica (strain FSC147).